Here is a 365-residue protein sequence, read N- to C-terminus: TD and POZ domain-containing protein 3 (365 aa).

In terms of domain architecture, MATH spans 19-149 (KFCYNWTISN…EDQFTICCKV (131 aa)). The 63-residue stretch at 188–250 (TDCCLLVAGH…EMMGFIYTGK (63 aa)) folds into the BTB domain.

This sequence belongs to the Tdpoz family.

This chain is TD and POZ domain-containing protein 3, found in Mus musculus (Mouse).